The following is a 682-amino-acid chain: Methionine--tRNA ligase (682 aa).

A 'HIGH' region motif is present at residues 12–22; the sequence is PYANGAIHLGH. Residues cysteine 143, cysteine 146, cysteine 156, and cysteine 159 each contribute to the Zn(2+) site. Residues 328 to 332 carry the 'KMSKS' region motif; the sequence is KMSKS. Lysine 331 is an ATP binding site. Residues 580 to 682 form the tRNA-binding domain; the sequence is DFAKLDLRVA…EGIRPGMQVK (103 aa).

This sequence belongs to the class-I aminoacyl-tRNA synthetase family. MetG type 1 subfamily. As to quaternary structure, homodimer. Zn(2+) serves as cofactor.

Its subcellular location is the cytoplasm. The enzyme catalyses tRNA(Met) + L-methionine + ATP = L-methionyl-tRNA(Met) + AMP + diphosphate. Is required not only for elongation of protein synthesis but also for the initiation of all mRNA translation through initiator tRNA(fMet) aminoacylation. The polypeptide is Methionine--tRNA ligase (Actinobacillus pleuropneumoniae serotype 7 (strain AP76)).